Consider the following 370-residue polypeptide: S-adenosylmethionine:tRNA ribosyltransferase-isomerase (370 aa).

This sequence belongs to the QueA family. In terms of assembly, monomer.

It localises to the cytoplasm. It carries out the reaction 7-aminomethyl-7-carbaguanosine(34) in tRNA + S-adenosyl-L-methionine = epoxyqueuosine(34) in tRNA + adenine + L-methionine + 2 H(+). Its pathway is tRNA modification; tRNA-queuosine biosynthesis. In terms of biological role, transfers and isomerizes the ribose moiety from AdoMet to the 7-aminomethyl group of 7-deazaguanine (preQ1-tRNA) to give epoxyqueuosine (oQ-tRNA). The polypeptide is S-adenosylmethionine:tRNA ribosyltransferase-isomerase (Prochlorococcus marinus (strain SARG / CCMP1375 / SS120)).